The primary structure comprises 142 residues: Large ribosomal subunit protein uL13 (142 aa).

The protein belongs to the universal ribosomal protein uL13 family. In terms of assembly, part of the 50S ribosomal subunit.

This protein is one of the early assembly proteins of the 50S ribosomal subunit, although it is not seen to bind rRNA by itself. It is important during the early stages of 50S assembly. The protein is Large ribosomal subunit protein uL13 of Pseudoalteromonas translucida (strain TAC 125).